Consider the following 317-residue polypeptide: Lactamase-like protein adaB (317 aa).

Positions 97, 99, 101, and 102 each coordinate Zn(2+). Catalysis depends on D101, which acts as the Proton donor/acceptor.

Belongs to the metallo-beta-lactamase superfamily. Zn(2+) serves as cofactor.

The enzyme catalyses 3-(2,4-dioxopentyl)-2,3,6,8,9-pentahydroxy-1-oxo-1,2,3,4-tetrahydroanthracene-2-carboxyl-[ACP] = 2-acetyl-3,4a,8,10,11,12a-hexahydroxy-1,4,4a,5,12,12a-hexahydrotetracene-1,12-dione + holo-[ACP] + H(+). It participates in secondary metabolite biosynthesis. In terms of biological role, lactamase-like protein; part of the gene cluster that mediates the biosynthesis of the linear tetracyclic TAN-1612 neuropeptide Y receptor antagonist. The decaketide backbone of TAN-1612 is synthesized by the non-reducing polyketide synthase adaA via condensation of one acetyl-CoA starter unit with 9 malonyl-CoA units. The FAD-dependent monooxygenase adaC then performs hydroxylation at C2 while the polaketide chain is still attached to the NRPKS adaA. The alpha-hydroxylation step at C2 appears to be crucial for the following C18-C1 Claisen cyclization and release of the C9-hydroxyl version of TAN-1612 from the NRPKS adaA, two steps performed by the lactamase-like protein adaB. Finally, the O-methyltransferase adaD performs the C9 O-methylation to complete the biosynthesis of TAN-1612. This chain is Lactamase-like protein adaB, found in Aspergillus niger (strain ATCC MYA-4892 / CBS 513.88 / FGSC A1513).